The following is a 591-amino-acid chain: V-type ATP synthase alpha chain (591 aa).

Gly232–Thr239 is a binding site for ATP.

The protein belongs to the ATPase alpha/beta chains family.

It catalyses the reaction ATP + H2O + 4 H(+)(in) = ADP + phosphate + 5 H(+)(out). In terms of biological role, produces ATP from ADP in the presence of a proton gradient across the membrane. The V-type alpha chain is a catalytic subunit. This is V-type ATP synthase alpha chain from Clostridium perfringens (strain ATCC 13124 / DSM 756 / JCM 1290 / NCIMB 6125 / NCTC 8237 / Type A).